We begin with the raw amino-acid sequence, 237 residues long: Protein CUSTOS (237 aa).

3 disordered regions span residues 1–23 (MAAP…LDRF), 50–69 (LRVR…TTPE), and 97–237 (ISKA…LGNE). Positions 52 to 62 (VRPDCHEHDGN) are enriched in basic and acidic residues. A compositionally biased stretch (polar residues) spans 162-177 (STLQQEPQSTPSNVCD). Basic residues predominate over residues 181 to 190 (PKKKRKKKKK). Residues 182-190 (KKKRKKKKK) carry the Nucleolar localization signal (NLS1) motif. Basic and acidic residues-rich tracts occupy residues 203 to 216 (ETMH…ELQA) and 225 to 237 (KLEM…LGNE). The Nucleolar localization signal (NLS2) signature appears at 217–225 (KRKKKKKQK).

This sequence belongs to the CUSTOS family. In terms of assembly, interacts (via NLS1 and NLS2) with dvl2; the interaction is negatively regulated by Wnt stimulation. Interacts with csnk1a1. Interacts with ctnnb1; the interaction is positively regulated by Wnt stimulation. In terms of processing, phosphorylated by ck1/csnk1a1.

The protein localises to the nucleus envelope. In terms of biological role, essential for Spemann-Mangold organizer formation and subsequent anterior head development in the embryo. Inhibits canonical Wnt signaling pathway by antagonizing nuclear import of beta-catenin (ctnnb1) during embryogenesis. This Xenopus laevis (African clawed frog) protein is Protein CUSTOS.